The following is a 356-amino-acid chain: UDP-N-acetylglucosamine--N-acetylmuramyl-(pentapeptide) pyrophosphoryl-undecaprenol N-acetylglucosamine transferase (356 aa).

Residues Arg-166, Ser-196, and Gln-290 each contribute to the UDP-N-acetyl-alpha-D-glucosamine site.

The protein belongs to the glycosyltransferase 28 family. MurG subfamily.

The protein resides in the cell membrane. The catalysed reaction is Mur2Ac(oyl-L-Ala-gamma-D-Glu-L-Lys-D-Ala-D-Ala)-di-trans,octa-cis-undecaprenyl diphosphate + UDP-N-acetyl-alpha-D-glucosamine = beta-D-GlcNAc-(1-&gt;4)-Mur2Ac(oyl-L-Ala-gamma-D-Glu-L-Lys-D-Ala-D-Ala)-di-trans,octa-cis-undecaprenyl diphosphate + UDP + H(+). Its pathway is cell wall biogenesis; peptidoglycan biosynthesis. Its function is as follows. Cell wall formation. Catalyzes the transfer of a GlcNAc subunit on undecaprenyl-pyrophosphoryl-MurNAc-pentapeptide (lipid intermediate I) to form undecaprenyl-pyrophosphoryl-MurNAc-(pentapeptide)GlcNAc (lipid intermediate II). This chain is UDP-N-acetylglucosamine--N-acetylmuramyl-(pentapeptide) pyrophosphoryl-undecaprenol N-acetylglucosamine transferase, found in Staphylococcus aureus (strain USA300).